Here is a 94-residue protein sequence, read N- to C-terminus: ATP synthase subunit c (94 aa).

Helical transmembrane passes span 15 to 35 and 58 to 78; these read IGVGVILAAAGLGSAIGWGLI and FIFAGLMESFPFIILAFAMWF.

It belongs to the ATPase C chain family. As to quaternary structure, F-type ATPases have 2 components, F(1) - the catalytic core - and F(0) - the membrane proton channel. F(1) has five subunits: alpha(3), beta(3), gamma(1), delta(1), epsilon(1). F(0) has three main subunits: a(1), b(2) and c(10-14). The alpha and beta chains form an alternating ring which encloses part of the gamma chain. F(1) is attached to F(0) by a central stalk formed by the gamma and epsilon chains, while a peripheral stalk is formed by the delta and b chains.

It is found in the cell inner membrane. Functionally, f(1)F(0) ATP synthase produces ATP from ADP in the presence of a proton or sodium gradient. F-type ATPases consist of two structural domains, F(1) containing the extramembraneous catalytic core and F(0) containing the membrane proton channel, linked together by a central stalk and a peripheral stalk. During catalysis, ATP synthesis in the catalytic domain of F(1) is coupled via a rotary mechanism of the central stalk subunits to proton translocation. In terms of biological role, key component of the F(0) channel; it plays a direct role in translocation across the membrane. A homomeric c-ring of between 10-14 subunits forms the central stalk rotor element with the F(1) delta and epsilon subunits. The chain is ATP synthase subunit c from Hydrogenovibrio crunogenus (strain DSM 25203 / XCL-2) (Thiomicrospira crunogena).